A 476-amino-acid chain; its full sequence is Serine protease HTRA1B (476 aa).

Positions 1-19 (MRLLILCASIILVPLLCDA) are cleaved as a signal peptide. The 85-residue stretch at 25–109 (YVIGCPERCD…RGKTGVCVCK (85 aa)) folds into the IGFBP N-terminal domain. 6 cysteine pairs are disulfide-bonded: cysteine 29–cysteine 54, cysteine 33–cysteine 56, cysteine 38–cysteine 57, cysteine 45–cysteine 60, cysteine 68–cysteine 85, and cysteine 79–cysteine 106. Residues 94–153 (TTTVRRRGKTGVCVCKSSEPVCGSDGVSYRNICELKRVSNRAQKLQQPPIIFIQRGACGK) enclose the Kazal-like domain. The serine protease stretch occupies residues 200 to 360 (GSGFVVSEDG…IPSDKIRQFL (161 aa)). Catalysis depends on charge relay system residues histidine 216, aspartate 246, and serine 324. A PDZ domain is found at 361–463 (AESHDRQAKG…LRAVVRRGNE (103 aa)).

Belongs to the peptidase S1C family. Forms homotrimers. In the presence of substrate, may form higher-order multimers in a PDZ-independent manner.

The protein resides in the secreted. The protein localises to the cytoplasm. It localises to the cytosol. Its function is as follows. Serine protease with a variety of targets, including extracellular matrix proteins and proteoglycans. Through cleavage of proteoglycans, may release soluble FGF-glycosaminoglycan complexes that promote the range and intensity of FGF signals in the extracellular space. Regulates the availability of insulin-like growth factors (IGFs) by cleaving IGF-binding proteins. Inhibits signaling mediated by TGF-beta family members. Consequently, may regulate many physiological processes. Intracellularly, degrades TSC2, leading to the activation of TSC2 downstream targets. The protein is Serine protease HTRA1B (htra1b) of Danio rerio (Zebrafish).